We begin with the raw amino-acid sequence, 348 residues long: Sulfate/thiosulfate import ATP-binding protein CysA (348 aa).

Residues 3-233 (ILIDNISKKF…PATPFVFSLL (231 aa)) form the ABC transporter domain. ATP is bound at residue 35–42 (GPSGSGKS).

Belongs to the ABC transporter superfamily. Sulfate/tungstate importer (TC 3.A.1.6) family.

The protein localises to the plastid. The protein resides in the chloroplast. The catalysed reaction is sulfate(out) + ATP + H2O = sulfate(in) + ADP + phosphate + H(+). It carries out the reaction thiosulfate(out) + ATP + H2O = thiosulfate(in) + ADP + phosphate + H(+). Its function is as follows. Part of the ABC transporter complex involved in sulfate/thiosulfate import. Responsible for energy coupling to the transport system. This is Sulfate/thiosulfate import ATP-binding protein CysA from Mesostigma viride (Green alga).